Here is a 1083-residue protein sequence, read N- to C-terminus: Phospholipase D beta 1 (1083 aa).

3 stretches are compositionally biased toward pro residues: residues 26–38 (RPPS…PPPT), 46–66 (YPYP…PPPH), and 132–148 (QYPP…PPPQ). Residues 26 to 231 (RPPSSEPYPP…PNSSFPSNSH (206 aa)) are disordered. Polar residues-rich tracts occupy residues 191–213 (ISTN…SWQS) and 222–231 (PNSSFPSNSH). In terms of domain architecture, C2 spans 252 to 393 (HSADMQMTLF…YSGAKIEGTY (142 aa)). D455 provides a ligand contact to Ca(2+). In terms of domain architecture, PLD phosphodiesterase 1 spans 595-630 (TIYTHHQKNVIVDADAGGNRRKIIAFVGGLDLCDGR). Residues H600, K602, and D607 contribute to the active site. H600 serves as a coordination point for a 1,2-diacyl-sn-glycero-3-phosphate. Ca(2+) is bound by residues H636 and H668. Q796 and H934 together coordinate a 1,2-diacyl-sn-glycero-3-phosphate. Residues 929 to 956 (FMVYVHSKGMVVDDEYVVIGSANINQRS) form the PLD phosphodiesterase 2 domain. Active-site residues include H934, K936, and D941. Position 997 (E997) interacts with Ca(2+).

It belongs to the phospholipase D family. C2-PLD subfamily. Ca(2+) is required as a cofactor. As to expression, expressed in stems, and to a lower amount in leaves, flowers and siliques.

The protein resides in the cytoplasm. Its subcellular location is the membrane. The enzyme catalyses a 1,2-diacyl-sn-glycero-3-phosphocholine + H2O = a 1,2-diacyl-sn-glycero-3-phosphate + choline + H(+). With respect to regulation, inhibited by neomycin. Up-regulated by PIP2 binding. In terms of biological role, hydrolyzes glycerol-phospholipids at the terminal phosphodiesteric bond to generate phosphatidic acids (PA). Plays an important role in various cellular processes, including phytohormone action, vesicular trafficking, secretion, cytoskeletal arrangement, meiosis, tumor promotion, pathogenesis, membrane deterioration and senescence. Involved in regulating stomatal movement and plant-water status. Can use phosphatidylserine (PS) and phosphatidylethanolamine (PE) as substrates only in the presence of PIP2. Can use phosphatidylcholine (PC), phosphatidylglycerol (PG) or N-acylphosphatidylethanolamine (NAPE) as substrates in the presence of PE and PIP2. Modulates defense responses to bacterial and fungal pathogens. This chain is Phospholipase D beta 1, found in Arabidopsis thaliana (Mouse-ear cress).